We begin with the raw amino-acid sequence, 266 residues long: 3-methyl-2-oxobutanoate hydroxymethyltransferase (266 aa).

The Mg(2+) site is built by Asp45 and Asp84. Residues 45 to 46 (DS), Asp84, and Lys112 each bind 3-methyl-2-oxobutanoate. Residue Glu114 coordinates Mg(2+). Glu181 functions as the Proton acceptor in the catalytic mechanism.

This sequence belongs to the PanB family. As to quaternary structure, homodecamer; pentamer of dimers. It depends on Mg(2+) as a cofactor.

The protein localises to the cytoplasm. It catalyses the reaction 3-methyl-2-oxobutanoate + (6R)-5,10-methylene-5,6,7,8-tetrahydrofolate + H2O = 2-dehydropantoate + (6S)-5,6,7,8-tetrahydrofolate. It functions in the pathway cofactor biosynthesis; (R)-pantothenate biosynthesis; (R)-pantoate from 3-methyl-2-oxobutanoate: step 1/2. In terms of biological role, catalyzes the reversible reaction in which hydroxymethyl group from 5,10-methylenetetrahydrofolate is transferred onto alpha-ketoisovalerate to form ketopantoate. In Pseudomonas syringae pv. tomato (strain ATCC BAA-871 / DC3000), this protein is 3-methyl-2-oxobutanoate hydroxymethyltransferase.